Consider the following 292-residue polypeptide: ATP synthase gamma chain (292 aa).

It belongs to the ATPase gamma chain family. As to quaternary structure, F-type ATPases have 2 components, CF(1) - the catalytic core - and CF(0) - the membrane proton channel. CF(1) has five subunits: alpha(3), beta(3), gamma(1), delta(1), epsilon(1). CF(0) has three main subunits: a, b and c.

The protein resides in the cell inner membrane. In terms of biological role, produces ATP from ADP in the presence of a proton gradient across the membrane. The gamma chain is believed to be important in regulating ATPase activity and the flow of protons through the CF(0) complex. This is ATP synthase gamma chain from Rhodopseudomonas palustris (strain BisB18).